Reading from the N-terminus, the 689-residue chain is Glycine--tRNA ligase beta subunit (689 aa).

This sequence belongs to the class-II aminoacyl-tRNA synthetase family. Tetramer of two alpha and two beta subunits.

The protein resides in the cytoplasm. It carries out the reaction tRNA(Gly) + glycine + ATP = glycyl-tRNA(Gly) + AMP + diphosphate. In Escherichia coli O127:H6 (strain E2348/69 / EPEC), this protein is Glycine--tRNA ligase beta subunit.